Here is a 280-residue protein sequence, read N- to C-terminus: Phosphatidylglycerol--prolipoprotein diacylglyceryl transferase (280 aa).

Transmembrane regions (helical) follow at residues 30–50 (WYGL…RRII), 71–91 (FLLW…ILFY), 106–126 (IWNG…AIII), and 132–152 (AIPL…GLFF). Arg-154 serves as a coordination point for a 1,2-diacyl-sn-glycero-3-phospho-(1'-sn-glycerol). 3 consecutive transmembrane segments (helical) span residues 188 to 208 (QLYE…WFVY), 217 to 237 (GLVT…VEFF), and 251 to 271 (WLTM…WAIA).

Belongs to the Lgt family.

Its subcellular location is the cell inner membrane. The catalysed reaction is L-cysteinyl-[prolipoprotein] + a 1,2-diacyl-sn-glycero-3-phospho-(1'-sn-glycerol) = an S-1,2-diacyl-sn-glyceryl-L-cysteinyl-[prolipoprotein] + sn-glycerol 1-phosphate + H(+). It functions in the pathway protein modification; lipoprotein biosynthesis (diacylglyceryl transfer). Functionally, catalyzes the transfer of the diacylglyceryl group from phosphatidylglycerol to the sulfhydryl group of the N-terminal cysteine of a prolipoprotein, the first step in the formation of mature lipoproteins. In Rhizobium meliloti (strain 1021) (Ensifer meliloti), this protein is Phosphatidylglycerol--prolipoprotein diacylglyceryl transferase.